The chain runs to 912 residues: Collagen alpha-2(I) chain (912 aa).

The span at 1 to 41 (GPMGIMGPRGPPGASGAPGPQGFQGPAGEPGEPGQTGPAGA) shows a compositional bias: low complexity. 3 disordered regions span residues 1 to 206 (GPMG…GITG), 222 to 739 (IPGP…GIIG), and 763 to 912 (GPPG…RGSQ). The segment covering 43–57 (AGEDGHPGKPGRPGE) has biased composition (basic and acidic residues). 6 stretches are compositionally biased toward low complexity: residues 124 to 153 (VGAP…SAGP), 178 to 192 (AGPR…ISGP), 229 to 244 (PGPA…RGIV), 295 to 327 (PGIR…VRGP), 360 to 382 (PVGI…RGEP), and 406 to 424 (AGIA…NGAQ). Over residues 431–440 (GVQGGKGEQG) the composition is skewed to gly residues. Composition is skewed to low complexity over residues 474–501 (IPGP…SRGP) and 517–532 (IGAP…SGIP). A compositionally biased stretch (gly residues) spans 539–548 (GIPGGKGEIG). Composition is skewed to low complexity over residues 549-612 (NPGR…QPGA) and 622-637 (NGPV…AGPS). Residues 647-656 (GSRGDGGPPG) show a composition bias toward gly residues. Composition is skewed to low complexity over residues 658-667 (TGFPGAAGRT), 728-739 (PQGIIGAPGIIG), 763-785 (GPPG…APGE), 805-815 (NAGPVGAVGAP), and 830-850 (PGPV…PSGP).

This sequence belongs to the fibrillar collagen family. Trimers of one alpha 2(I) and two alpha 1(I) chains. Interacts (via C-terminus) with TMEM131 (via PapD-L domain); the interaction is direct and is involved in assembly and TRAPPIII ER-to-Golgi transport complex-dependent secretion of collagen. Post-translationally, prolines at the third position of the tripeptide repeating unit (G-X-Y) are hydroxylated in some or all of the chains. As to expression, forms the fibrils of tendon, ligaments and bones. In bones, the fibrils are mineralized with calcium hydroxyapatite.

The protein resides in the secreted. Its subcellular location is the extracellular space. It localises to the extracellular matrix. Type I collagen is a member of group I collagen (fibrillar forming collagen). In Equus sp, this protein is Collagen alpha-2(I) chain.